The sequence spans 273 residues: Putative pyruvate, phosphate dikinase regulatory protein (273 aa).

Position 153–160 (153–160) interacts with ADP; that stretch reads GVSRTSKS.

This sequence belongs to the pyruvate, phosphate/water dikinase regulatory protein family. PDRP subfamily.

The enzyme catalyses N(tele)-phospho-L-histidyl/L-threonyl-[pyruvate, phosphate dikinase] + ADP = N(tele)-phospho-L-histidyl/O-phospho-L-threonyl-[pyruvate, phosphate dikinase] + AMP + H(+). It catalyses the reaction N(tele)-phospho-L-histidyl/O-phospho-L-threonyl-[pyruvate, phosphate dikinase] + phosphate + H(+) = N(tele)-phospho-L-histidyl/L-threonyl-[pyruvate, phosphate dikinase] + diphosphate. Functionally, bifunctional serine/threonine kinase and phosphorylase involved in the regulation of the pyruvate, phosphate dikinase (PPDK) by catalyzing its phosphorylation/dephosphorylation. The sequence is that of Putative pyruvate, phosphate dikinase regulatory protein from Ehrlichia canis (strain Jake).